Consider the following 345-residue polypeptide: Protein RecA (345 aa).

Position 65–72 (65–72 (GPESSGKT)) interacts with ATP.

The protein belongs to the RecA family.

The protein resides in the cytoplasm. In terms of biological role, can catalyze the hydrolysis of ATP in the presence of single-stranded DNA, the ATP-dependent uptake of single-stranded DNA by duplex DNA, and the ATP-dependent hybridization of homologous single-stranded DNAs. It interacts with LexA causing its activation and leading to its autocatalytic cleavage. In Hahella chejuensis (strain KCTC 2396), this protein is Protein RecA.